Reading from the N-terminus, the 100-residue chain is Aspartyl/glutamyl-tRNA(Asn/Gln) amidotransferase subunit C (100 aa).

This sequence belongs to the GatC family. As to quaternary structure, heterotrimer of A, B and C subunits.

It catalyses the reaction L-glutamyl-tRNA(Gln) + L-glutamine + ATP + H2O = L-glutaminyl-tRNA(Gln) + L-glutamate + ADP + phosphate + H(+). The catalysed reaction is L-aspartyl-tRNA(Asn) + L-glutamine + ATP + H2O = L-asparaginyl-tRNA(Asn) + L-glutamate + ADP + phosphate + 2 H(+). Its function is as follows. Allows the formation of correctly charged Asn-tRNA(Asn) or Gln-tRNA(Gln) through the transamidation of misacylated Asp-tRNA(Asn) or Glu-tRNA(Gln) in organisms which lack either or both of asparaginyl-tRNA or glutaminyl-tRNA synthetases. The reaction takes place in the presence of glutamine and ATP through an activated phospho-Asp-tRNA(Asn) or phospho-Glu-tRNA(Gln). The sequence is that of Aspartyl/glutamyl-tRNA(Asn/Gln) amidotransferase subunit C from Staphylococcus carnosus (strain TM300).